We begin with the raw amino-acid sequence, 149 residues long: Glutamate mutase sigma subunit (149 aa).

The 138-residue stretch at 3–140 folds into the B12-binding domain; it reads KATLVIGVIG…AHDINQRHDV (138 aa). Residues 13–17, His-16, 61–63, and 93–97 each bind adenosylcob(III)alamin; these read ADCHA, SSI, and NLVVG.

Belongs to the methylaspartate mutase GlmS subunit family. In terms of assembly, heterotetramer composed of 2 epsilon subunits (GlmE) and 2 sigma subunits (GlmS). GlmE exists as a homodimer and GlmS as a monomer. It depends on adenosylcob(III)alamin as a cofactor.

It carries out the reaction (2S,3S)-3-methyl-L-aspartate = L-glutamate. The protein operates within amino-acid degradation; L-glutamate degradation via mesaconate pathway; acetate and pyruvate from L-glutamate: step 1/4. In terms of biological role, catalyzes the carbon skeleton rearrangement of L-glutamate to L-threo-3-methylaspartate ((2S,3S)-3-methylaspartate). The polypeptide is Glutamate mutase sigma subunit (Escherichia coli O157:H7).